We begin with the raw amino-acid sequence, 511 residues long: MALRAMRGIVNGAAPELPVPTGGPTVGAREQALAVSRNYLSQPRLTYKTVSGVNGPLVILDHVKFPRYAEIVHLTLPDGTKRSGQVLEVSGSKAVVQVFEGTSGIDAKKTSCEFTGDILRTPVSEDMLGRVFNGSGKPIDRGPVVLAEDFLDIMGQPINPQCRIYPEEMIQTGISAIDGMNSIARGQKIPIFSAAGLPHNEIAAQICRQAGLVKKSKDVVDYSEENFAIVFAAMGVNMETARFFKSDFEENGSMDNVCLFLNLANDPTIERIITPRLALTTAEFLAYQCEKHVLVILTDMSSYAEALREVSAAREEVPGRRGFPGYMYTDLATIYERAGRVEGRNGSITQIPILTMPNDDITHPIPDLTGYITEGQIYVDRQLHNRQIYPPINVLPSLSRLMKSAIGEGMTRKDHADVSNQLYACYAIGKDVQAMKAVVGEEALTSDDLLYLEFLQKFERNFIAQGPYENRTVFETLDIGWQLLRIFPKEMLKRIPQSTLSEFYPRDSAKH.

Residue Arg400 coordinates ATP.

Belongs to the ATPase alpha/beta chains family. V-ATPase is a heteromultimeric enzyme made up of two complexes: the ATP-hydrolytic V1 complex and the proton translocation V0 complex. The V1 complex consists of three catalytic AB heterodimers that form a heterohexamer, three peripheral stalks each consisting of EG heterodimers, one central rotor including subunits D and F, and the regulatory subunits C and H. The proton translocation complex V0 consists of the proton transport subunit a, a ring of proteolipid subunits c9c'', rotary subunit d, subunits e and f, and the accessory subunits ATP6AP1/Ac45 and ATP6AP2/PRR.

Its subcellular location is the apical cell membrane. It is found in the melanosome. The protein resides in the cytoplasm. It localises to the cytoplasmic vesicle. The protein localises to the secretory vesicle. Its subcellular location is the synaptic vesicle membrane. It is found in the clathrin-coated vesicle membrane. In terms of biological role, non-catalytic subunit of the V1 complex of vacuolar(H+)-ATPase (V-ATPase), a multisubunit enzyme composed of a peripheral complex (V1) that hydrolyzes ATP and a membrane integral complex (V0) that translocates protons. V-ATPase is responsible for acidifying and maintaining the pH of intracellular compartments and in some cell types, is targeted to the plasma membrane, where it is responsible for acidifying the extracellular environment. In renal intercalated cells, can partially compensate the lack of ATP6V1B1 and mediate secretion of protons (H+) into the urine under base-line conditions but not in conditions of acid load. The sequence is that of V-type proton ATPase subunit B, brain isoform (ATP6V1B2) from Pongo abelii (Sumatran orangutan).